The sequence spans 660 residues: Nuclear factor erythroid 2-related factor 3 (660 aa).

The tract at residues 120–214 (SAVGDGGQSA…KTEEHKMACA (95 aa)) is disordered. Gly residues predominate over residues 123-135 (GDGGQSASAGGGD). 2 stretches are compositionally biased toward basic and acidic residues: residues 173-186 (MLRE…HSSQ) and 204-214 (SKTEEHKMACA). The bZIP domain maps to 541-604 (LIRDIRRRGK…DIMRQKLHGL (64 aa)). Positions 543-562 (RDIRRRGKNKVAAQNCRKRK) are basic motif. The leucine-zipper stretch occupies residues 566 to 573 (ILNLEDDI).

This sequence belongs to the bZIP family. CNC subfamily. As to quaternary structure, heterodimer with MAFG, MAFK and other small MAF proteins that binds to the MAF recognition elements (MARE). As to expression, high level expression in brain, thymus, testis and placenta. Medium level expression in uterus, stomach and lung. Low level expression in kidney. No expression in heart, liver, spleen and ovary.

The protein localises to the nucleus. In terms of biological role, activates erythroid-specific, globin gene expression. The sequence is that of Nuclear factor erythroid 2-related factor 3 (Nfe2l3) from Mus musculus (Mouse).